Reading from the N-terminus, the 356-residue chain is Heat-inducible transcription repressor HrcA (356 aa).

Belongs to the HrcA family.

In terms of biological role, negative regulator of class I heat shock genes (grpE-dnaK-dnaJ and groELS operons). Prevents heat-shock induction of these operons. This chain is Heat-inducible transcription repressor HrcA, found in Bartonella tribocorum (strain CIP 105476 / IBS 506).